We begin with the raw amino-acid sequence, 632 residues long: tRNA uridine 5-carboxymethylaminomethyl modification enzyme MnmG (632 aa).

14–19 (GAGHAG) contacts FAD. Residue 273–287 (GPRYCPSFEDKIMRF) participates in NAD(+) binding.

Belongs to the MnmG family. In terms of assembly, homodimer. Heterotetramer of two MnmE and two MnmG subunits. The cofactor is FAD.

The protein localises to the cytoplasm. Its function is as follows. NAD-binding protein involved in the addition of a carboxymethylaminomethyl (cmnm) group at the wobble position (U34) of certain tRNAs, forming tRNA-cmnm(5)s(2)U34. The chain is tRNA uridine 5-carboxymethylaminomethyl modification enzyme MnmG from Clostridium novyi (strain NT).